A 207-amino-acid polypeptide reads, in one-letter code: Ribosomal RNA small subunit methyltransferase G (207 aa).

S-adenosyl-L-methionine is bound by residues Gly-73, Leu-78, 124 to 125 (VE), and Arg-139.

It belongs to the methyltransferase superfamily. RNA methyltransferase RsmG family.

The protein localises to the cytoplasm. The enzyme catalyses guanosine(527) in 16S rRNA + S-adenosyl-L-methionine = N(7)-methylguanosine(527) in 16S rRNA + S-adenosyl-L-homocysteine. Functionally, specifically methylates the N7 position of guanine in position 527 of 16S rRNA. The sequence is that of Ribosomal RNA small subunit methyltransferase G from Klebsiella pneumoniae (strain 342).